The primary structure comprises 627 residues: MAKVIQLSDELSNKIAAGEVVERPASVVKELVENAIDADSTVIEIDIEEAGLASIRVLDNGEGMENEDCKRAFRRHATSKIKDENDLFRVRTLGFRGEALPSIASVSHLEITTSTGEGAGTKLVLQGGNIISESRSSSRKGTEIVVSNLFFNTPARLKYMKTVHTELGNITDVVNRIALAHPEVSIRLRHHGKNLLQTNGNGDVRHVLAAIYGTAVAKKMLPLHVSSLDFEVKGYIALPEITRASRNYMSSVVNGRYIKNFPLVKAVHEGYHTLLPIGRHPITFIEITMDPILVDVNVHPSKLEVRLSKETELHDLIRDGIKDVFKQQQLIPSAQVPKKSAPAIKNEQQFITFDEKPPEKKVPEKSTAPSYSPMKLSSVVKEPVDAEEKLPPLQFDAPPIVDQEQTLEVSDVSAEQPETFEQECHEEQPQPASDRVPIMYPIGQMHGTYILAQNENGLYIIDQHAAQERIKYEYFREKVGEVEPEVQEMIVPLTFHYSTNEALIIEQHKQELESVGVFLESFGSNSYIVRCHPAWFPKGEEAELIEEIIQQVLDSKNIDIKKLREEAAIMMSCKGSIKANRHLRNDEIKALLDDLRSTSDPFTCPHGRPIIIHHSTYEMEKMFKRVM.

Positions 354 to 364 (DEKPPEKKVPE) are enriched in basic and acidic residues. The disordered stretch occupies residues 354 to 374 (DEKPPEKKVPEKSTAPSYSPM).

The protein belongs to the DNA mismatch repair MutL/HexB family.

In terms of biological role, this protein is involved in the repair of mismatches in DNA. It is required for dam-dependent methyl-directed DNA mismatch repair. May act as a 'molecular matchmaker', a protein that promotes the formation of a stable complex between two or more DNA-binding proteins in an ATP-dependent manner without itself being part of a final effector complex. Overexpression of mutSL partially suppresses the high spontaneous mutation frequency of a ytkD/mutM/mutY triple disruption which lacks the system required to prevent damage by oxidized guanine (8-oxo-dGTP). This suggests that MutSL also functions to repair mismatches due to oxidative stress in both growing and stationary phase cells. The protein is DNA mismatch repair protein MutL of Bacillus subtilis (strain 168).